A 421-amino-acid chain; its full sequence is Early growth response protein 2 (421 aa).

Over residues 127–145 (CSSTSSSNASSGSPNLSCS) the composition is skewed to low complexity. 3 disordered regions span residues 127-152 (CSSTSSSNASSGSPNLSCSMSHPQSD), 179-200 (SPTAASLPPPPSYPSPKGASDG), and 223-288 (SDRK…ERPY). Polar residues predominate over residues 236 to 247 (PLSTIRNFTLGG). 3 consecutive C2H2-type zinc fingers follow at residues 288-312 (YPCPAEGCDRRFSRSDELTRHIRIH), 318-340 (FQCRICMRNFSRSDHLTTHIRTH), and 346-368 (FACDYCGRKFARSDERKRHTKIH).

Belongs to the EGR C2H2-type zinc-finger protein family.

The protein resides in the nucleus. In terms of biological role, sequence-specific DNA-binding transcription factor. This is Early growth response protein 2 (egr2) from Xenopus laevis (African clawed frog).